The primary structure comprises 378 residues: MLKLIGSLVLLASAAEVIASPLAESVAPSITLEKRASCTFSGSNGAAAAMASQKACSTIVLSNVAVPAGTTLDLSDLADGTTVIFEGETTWGYKEWSGPLLQISGKNIKVEGASGATLNPDGARWWDGQGGNGGKTKPKFFAAHGLTSSSSITNLHILNTPVQAVSINGCDGLTVTDMTIDDSAGDTQGGHNTDAFDIGSSSNIIISGAKVYNQDDCVAVNSGTGITFTGGLCSGGHGLSIGSVGGRSDNTVENVSFTNSQVTKSDNGLRIKASKGKTGTIKGITYSGITLSSIRKYGILIEQNYDGGDLKGDPTSGIPITDLTMENISGKGAVASSGHNIAIVCGSGACSNWTWKNVEVTGGQTYGSCENVPSVAQC.

The signal sequence occupies residues 1-19 (MLKLIGSLVLLASAAEVIA). Residues 20-35 (SPLAESVAPSITLEKR) constitute a propeptide that is removed on maturation. A disulfide bridge connects residues Cys-38 and Cys-56. PbH1 repeat units follow at residues 147–169 (TSSSSITNLHILNTPVQAVSING), 170–200 (CDGLTVTDMTIDDSAGDTQGGHNTDAFDIGS), and 201–222 (SSNIIISGAKVYNQDDCVAVNS). Asp-215 acts as the Proton donor in catalysis. Cys-217 and Cys-233 are disulfide-bonded. His-237 is an active-site residue. PbH1 repeat units lie at residues 247-273 (RSDNTVENVSFTNSQVTKSDNGLRIKA) and 281-303 (IKGITYSGITLSSIRKYGILIEQ). A glycan (N-linked (GlcNAc...) asparagine) is linked at Asn-254. An N-linked (GlcNAc...) asparagine glycan is attached at Asn-327. Cystine bridges form between Cys-345/Cys-350 and Cys-369/Cys-378.

This sequence belongs to the glycosyl hydrolase 28 family.

Its subcellular location is the secreted. The catalysed reaction is (1,4-alpha-D-galacturonosyl)n+m + H2O = (1,4-alpha-D-galacturonosyl)n + (1,4-alpha-D-galacturonosyl)m.. Its function is as follows. Involved in maceration and soft-rotting of plant tissue. Hydrolyzes the 1,4-alpha glycosidic bonds of de-esterified pectate in the smooth region of the plant cell wall. This chain is Probable endopolygalacturonase NFIA_008150, found in Neosartorya fischeri (strain ATCC 1020 / DSM 3700 / CBS 544.65 / FGSC A1164 / JCM 1740 / NRRL 181 / WB 181) (Aspergillus fischerianus).